A 38-amino-acid chain; its full sequence is Photosystem II reaction center protein L (38 aa).

A helical transmembrane segment spans residues 17 to 37 (SLYWGLLLIFVLAVLFSSYIF).

The protein belongs to the PsbL family. In terms of assembly, PSII is composed of 1 copy each of membrane proteins PsbA, PsbB, PsbC, PsbD, PsbE, PsbF, PsbH, PsbI, PsbJ, PsbK, PsbL, PsbM, PsbT, PsbX, PsbY, PsbZ, Psb30/Ycf12, at least 3 peripheral proteins of the oxygen-evolving complex and a large number of cofactors. It forms dimeric complexes.

Its subcellular location is the plastid. It is found in the chloroplast thylakoid membrane. Functionally, one of the components of the core complex of photosystem II (PSII). PSII is a light-driven water:plastoquinone oxidoreductase that uses light energy to abstract electrons from H(2)O, generating O(2) and a proton gradient subsequently used for ATP formation. It consists of a core antenna complex that captures photons, and an electron transfer chain that converts photonic excitation into a charge separation. This subunit is found at the monomer-monomer interface and is required for correct PSII assembly and/or dimerization. This is Photosystem II reaction center protein L from Ostreococcus tauri.